Consider the following 422-residue polypeptide: Trichothecene biosynthesis transcription regulator TRI10 (422 aa).

This sequence belongs to the TRI10 transcription regulator family.

It localises to the nucleus. Its function is as follows. Transcriptional activator of all of the trichothecene biosynthesis genes. Acts upstream of the cluster-encoded transcription factor TRI6 and is necessary for full expression of both the other trichothecene genes and the genes for the primary metabolic pathway that precedes the trichothecene biosynthetic pathway. The sequence is that of Trichothecene biosynthesis transcription regulator TRI10 from Trichoderma arundinaceum.